The chain runs to 1267 residues: Probable ATP-dependent RNA helicase DHR1 (1267 aa).

Disordered regions lie at residues 1–67 (MGTY…EPLT), 168–233 (YEPK…SNIK), and 255–313 (EELK…DQND). Composition is skewed to basic and acidic residues over residues 7–25 (RFNE…ELKR) and 32–43 (TRQDENDERVEN). A compositionally biased stretch (acidic residues) spans 175-192 (EYGEGGSSEDDDGEDDFE). Ser181 is modified (phosphoserine). The span at 202–217 (TDNEEKKSSGFIDHRP) shows a compositional bias: basic and acidic residues. Residues 264–284 (DEMDFDTTSEDDDEEEDQEEE) show a composition bias toward acidic residues. Positions 401–580 (MEAIHHNDVV…KTLFPIAPPV (180 aa)) constitute a Helicase ATP-binding domain. Position 414-421 (414-421 (GETGSGKT)) interacts with ATP. The DEAH box motif lies at 516–519 (DEAH). The Helicase C-terminal domain occupies 675-858 (DIDFSVQVID…SIVLQMKSMA (184 aa)). 2 disordered regions span residues 693-720 (RYEE…EVLT) and 955-976 (PNPD…PGMD). The segment covering 695–719 (EEDEGNSGNGEDEEDEEEEGFEEVL) has biased composition (acidic residues).

Belongs to the DEAD box helicase family. DEAH subfamily. Interacts with snoRNA U3. Component of the ribosomal small subunit (SSU) processome composed of at least 40 protein subunits and snoRNA U3.

The protein resides in the nucleus. The protein localises to the nucleolus. It carries out the reaction ATP + H2O = ADP + phosphate + H(+). Probable ATP-binding RNA helicase. Required for 18S rRNA synthesis. May play a role in restructuring of the pre-rRNA. This Saccharomyces cerevisiae (strain ATCC 204508 / S288c) (Baker's yeast) protein is Probable ATP-dependent RNA helicase DHR1 (ECM16).